Reading from the N-terminus, the 1151-residue chain is Phospholipid-transporting ATPase NEO1 (1151 aa).

Disordered regions lie at residues 1–21 and 73–95; these read MPNPPSFKSHKQNLFNSNNNQ and LDNFSNHSSDSHRKSSNTDTHPL. Topologically, residues 1 to 184 are extracellular; that stretch reads MPNPPSFKSH…LSNAKYNAVT (184 aa). Over residues 12–21 the composition is skewed to polar residues; sequence QNLFNSNNNQ. The tract at residues 51 to 104 is required for endosome-to-Golgi sorting; it reads EPLSKHNTVGDRESFEMRTVDDLDNFSNHSSDSHRKSSNTDTHPLMYDNRLSQD. Ser-102 is modified (phosphoserine). A helical transmembrane segment spans residues 185 to 205; that stretch reads FVPTLLYEQFKFFYNLYFLVV. Over 206–209 the chain is Cytoplasmic; it reads ALSQ. Residues 210–230 traverse the membrane as a helical segment; the sequence is AVPALRIGYLSSYIVPLAFVL. Residues 231-367 are Extracellular-facing; sequence TVTMAKEAID…TSNPLSVDNT (137 aa). The chain crosses the membrane as a helical span at residues 368 to 388; that stretch reads LWANTVLASSGFCIACVVYTG. Residues 389–416 lie on the Cytoplasmic side of the membrane; that stretch reads RDTRQAMNTTTAKVKTGLLELEINSISK. A helical membrane pass occupies residues 417–437; that stretch reads ILCACVFALSILLVAFAGFHN. Asp-438 is a topological domain (extracellular). The helical transmembrane segment at 439–459 threads the bilayer; sequence DWYIDILRYLILFSTIIPVSL. Topologically, residues 460–947 are cytoplasmic; it reads RVNLDLAKSV…KLAQFVMHRG (488 aa). Asp-503 serves as the catalytic 4-aspartylphosphate intermediate. ATP-binding residues include Asp-503, Lys-504, and Thr-505. Residue Asp-503 coordinates Mg(2+). Position 505 (Thr-505) interacts with Mg(2+). At Ser-551 the chain carries Phosphoserine. Glu-597, Phe-640, Ser-642, Lys-645, Lys-664, Arg-693, Thr-694, Thr-774, Gly-775, Asp-776, Arg-856, and Lys-862 together coordinate ATP. Asp-882 is a binding site for Mg(2+). 2 residues coordinate ATP: Asn-885 and Asp-886. Position 886 (Asp-886) interacts with Mg(2+). A helical transmembrane segment spans residues 948 to 968; that stretch reads LIIAICQAVYSICSLFEPIAL. At 969 to 970 the chain is on the extracellular side; sequence YQ. Residues 971-991 form a helical membrane-spanning segment; the sequence is GWLMVGYATCYTMAPVFSLTL. Residues 992–1020 are Cytoplasmic-facing; it reads DHDIEESLTKIYPELYKELTEGKSLSYKT. A helical transmembrane segment spans residues 1021 to 1041; sequence FFVWVLLSLFQGSVIQLFSQA. The Extracellular portion of the chain corresponds to 1042-1052; the sequence is FTSLLDTDFTR. Residues 1053 to 1073 traverse the membrane as a helical segment; sequence MVAISFTALVVNELIMVALEI. Over 1074–1078 the chain is Cytoplasmic; it reads YTWNK. Residues 1079–1099 form a helical membrane-spanning segment; it reads TMLVTEIATLLFYIVSVPFLG. Over 1100 to 1109 the chain is Extracellular; the sequence is DYFDLGYMTT. A helical transmembrane segment spans residues 1110 to 1130; the sequence is VNYYAGLLVILLISIFPVWTA. Over 1131-1151 the chain is Cytoplasmic; that stretch reads KAIYRRLHPPSYAKVQEFATP. The segment at 1131-1151 is required for endosomal targeting; sequence KAIYRRLHPPSYAKVQEFATP.

It belongs to the cation transport ATPase (P-type) (TC 3.A.3) family. Type IV subfamily. In terms of assembly, interacts with MON2. Interacts with ANY1. Functions without a CDC50/LEM3 family accessory subunit. The cofactor is Mg(2+).

It is found in the endosome membrane. The protein localises to the golgi apparatus membrane. The catalysed reaction is ATP + H2O + phospholipidSide 1 = ADP + phosphate + phospholipidSide 2.. It carries out the reaction a 1,2-diacyl-sn-glycero-3-phospho-L-serine(out) + ATP + H2O = a 1,2-diacyl-sn-glycero-3-phospho-L-serine(in) + ADP + phosphate + H(+). It catalyses the reaction a 1,2-diacyl-sn-glycero-3-phosphoethanolamine(out) + ATP + H2O = a 1,2-diacyl-sn-glycero-3-phosphoethanolamine(in) + ADP + phosphate + H(+). Functionally, flippase that catalyzes the hydrolysis of ATP coupled to the transport of lysophosphatidylserine, phosphatidylethanolamine, and phosphatidylserine from the lumenal to the cytosolic leaflet of the Golgi apparatus membrane and ensures the maintenance of asymmetric distribution of phospholipids. Does not appear to transport phosphatidylcholine or sphingomyelin. May be involved in recycling from endosomes by driving the formation of SNX3-dependent recycling tubules. Required for COPI retrograde transport from the Golgi to the endoplasmic reticulum, Golgi-endosome trafficking, and Golgi-dependent protein glycosylation. This Saccharomyces cerevisiae (strain ATCC 204508 / S288c) (Baker's yeast) protein is Phospholipid-transporting ATPase NEO1.